A 245-amino-acid polypeptide reads, in one-letter code: 4-hydroxy-tetrahydrodipicolinate reductase (245 aa).

NAD(+) contacts are provided by residues 7–12, 75–77, and 102–105; these read GAKGKV, GTT, and APNF. The active-site Proton donor/acceptor is the H132. H133 contributes to the (S)-2,3,4,5-tetrahydrodipicolinate binding site. Residue K136 is the Proton donor of the active site. A (S)-2,3,4,5-tetrahydrodipicolinate-binding site is contributed by 142–143; it reads GT.

The protein belongs to the DapB family.

The protein localises to the cytoplasm. It catalyses the reaction (S)-2,3,4,5-tetrahydrodipicolinate + NAD(+) + H2O = (2S,4S)-4-hydroxy-2,3,4,5-tetrahydrodipicolinate + NADH + H(+). It carries out the reaction (S)-2,3,4,5-tetrahydrodipicolinate + NADP(+) + H2O = (2S,4S)-4-hydroxy-2,3,4,5-tetrahydrodipicolinate + NADPH + H(+). Its pathway is amino-acid biosynthesis; L-lysine biosynthesis via DAP pathway; (S)-tetrahydrodipicolinate from L-aspartate: step 4/4. Catalyzes the conversion of 4-hydroxy-tetrahydrodipicolinate (HTPA) to tetrahydrodipicolinate. This Mycobacterium bovis (strain ATCC BAA-935 / AF2122/97) protein is 4-hydroxy-tetrahydrodipicolinate reductase.